The chain runs to 186 residues: C-type lectin domain family 19 member A (186 aa).

An N-terminal signal peptide occupies residues 1–19 (MQRWTLWAAAFLTLHSAQA). The C-type lectin domain maps to 47–179 (FKGHCYRFFP…CSRKFPFVCK (133 aa)). An N-linked (GlcNAc...) asparagine glycan is attached at asparagine 58. 2 disulfides stabilise this stretch: cysteine 68-cysteine 178 and cysteine 151-cysteine 170.

It localises to the secreted. This chain is C-type lectin domain family 19 member A, found in Homo sapiens (Human).